A 340-amino-acid chain; its full sequence is tRNA (cytosine(34)-C(5))-methyltransferase, mitochondrial (340 aa).

S-adenosyl-L-methionine contacts are provided by residues 139 to 145 (CAAPGGK), Glu-162, Asp-193, and Asp-211. The Nucleophile role is filled by Cys-265.

Belongs to the class I-like SAM-binding methyltransferase superfamily. RsmB/NOP family.

It localises to the mitochondrion matrix. It carries out the reaction cytidine(34) in mitochondrial tRNA + S-adenosyl-L-methionine = 5-methylcytidine(34) in mitochondrial tRNA + S-adenosyl-L-homocysteine + H(+). Its function is as follows. Mitochondrial tRNA methyltransferase that mediates methylation of cytosine to 5-methylcytosine (m5C) at position 34 of mt-tRNA(Met). mt-tRNA(Met) methylation at cytosine(34) takes place at the wobble position of the anticodon and initiates the formation of 5-formylcytosine (f(5)c) at this position. mt-tRNA(Met) containing the f(5)c modification at the wobble position enables recognition of the AUA codon in addition to the AUG codon, expanding codon recognition in mitochondrial translation. This is tRNA (cytosine(34)-C(5))-methyltransferase, mitochondrial from Homo sapiens (Human).